The primary structure comprises 239 residues: LexA repressor (239 aa).

A DNA-binding region (H-T-H motif) is located at residues phenylalanine 26 to threonine 46. Catalysis depends on for autocatalytic cleavage activity residues serine 159 and lysine 197.

Belongs to the peptidase S24 family. In terms of assembly, homodimer.

It catalyses the reaction Hydrolysis of Ala-|-Gly bond in repressor LexA.. Functionally, represses a number of genes involved in the response to DNA damage (SOS response), including recA and lexA. In the presence of single-stranded DNA, RecA interacts with LexA causing an autocatalytic cleavage which disrupts the DNA-binding part of LexA, leading to derepression of the SOS regulon and eventually DNA repair. This chain is LexA repressor, found in Rhizobium etli (strain CIAT 652).